The chain runs to 151 residues: Ribosomal RNA large subunit methyltransferase H (151 aa).

Residues glycine 100 and 119–124 each bind S-adenosyl-L-methionine; that span reads LSKMTF.

This sequence belongs to the RNA methyltransferase RlmH family. As to quaternary structure, homodimer.

The protein resides in the cytoplasm. It catalyses the reaction pseudouridine(1915) in 23S rRNA + S-adenosyl-L-methionine = N(3)-methylpseudouridine(1915) in 23S rRNA + S-adenosyl-L-homocysteine + H(+). Its function is as follows. Specifically methylates the pseudouridine at position 1915 (m3Psi1915) in 23S rRNA. The protein is Ribosomal RNA large subunit methyltransferase H of Thermotoga sp. (strain RQ2).